Reading from the N-terminus, the 122-residue chain is Large ribosomal subunit protein uL18 (122 aa).

Belongs to the universal ribosomal protein uL18 family. Part of the 50S ribosomal subunit; part of the 5S rRNA/L5/L18/L25 subcomplex. Contacts the 5S and 23S rRNAs.

In terms of biological role, this is one of the proteins that bind and probably mediate the attachment of the 5S RNA into the large ribosomal subunit, where it forms part of the central protuberance. This Fervidobacterium nodosum (strain ATCC 35602 / DSM 5306 / Rt17-B1) protein is Large ribosomal subunit protein uL18.